We begin with the raw amino-acid sequence, 3423 residues long: Genome polyprotein (3423 aa).

The disordered stretch occupies residues Met1 to Ser25. At Met1 to Arg104 the chain is on the cytoplasmic side. The interval Leu37–Val72 is hydrophobic; homodimerization of capsid protein C. Residues Gly105–Ala122 constitute a propeptide, ER anchor for capsid protein C, removed in mature form by serine protease NS3. Residues Gly105–Val125 form a helical membrane-spanning segment. Over Thr126–Asn249 the chain is Extracellular. An N-linked (GlcNAc...) asparagine; by host glycan is attached at Asn192. A helical transmembrane segment spans residues Trp250–Gly269. At Ser270–Gln274 the chain is on the cytoplasmic side. The chain crosses the membrane as a helical span at residues Lys275 to Ser290. Residues Ile291–Ser745 are Extracellular-facing. Residue Lys328 forms a Glycyl lysine isopeptide (Lys-Gly) (interchain with G-Cter in ubiquitin) linkage. 2 disulfide bridges follow: Cys350/Cys406 and Cys382/Cys411. Residues Asp388–Gly401 are fusion peptide. N-linked (GlcNAc...) asparagine; by host glycosylation occurs at Asn444. 2 disulfides stabilise this stretch: Cys480–Cys581 and Cys598–Cys629. Residue Lys571 forms a Glycyl lysine isopeptide (Lys-Gly) (interchain with G-Cter in ubiquitin) linkage. A helical membrane pass occupies residues Leu746–Leu767. Over Asn768–Ser773 the chain is Cytoplasmic. The helical transmembrane segment at Ile774 to Ala794 threads the bilayer. Topologically, residues Asp795–Lys1177 are lumenal. Disulfide bonds link Cys798–Cys809, Cys849–Cys937, Cys973–Cys1017, Cys1074–Cys1123, Cys1085–Cys1106, and Cys1107–Cys1110. Residues Asn924 and Asn1001 are each glycosylated (N-linked (GlcNAc...) asparagine; by host). Residues Ile1178–Ser1198 form a helical membrane-spanning segment. Topologically, residues Asp1199–Val1220 are cytoplasmic. Residues Ala1221–Phe1241 form a helical membrane-spanning segment. The Lumenal portion of the chain corresponds to Arg1242–Asp1270. A helical membrane pass occupies residues Leu1271–Pro1291. Topologically, residues Arg1292–Asn1295 are cytoplasmic. A helical transmembrane segment spans residues Ile1296–Trp1316. Residues Arg1317–Met1345 lie on the Lumenal side of the membrane. Residues Ala1346–Leu1366 traverse the membrane as a helical segment. Residues Thr1367–Ser1373 lie on the Cytoplasmic side of the membrane. The helical transmembrane segment at Trp1374–Ala1394 threads the bilayer. Topologically, residues Lys1395–Asp1397 are lumenal. The helical transmembrane segment at Ile1398–Gly1418 threads the bilayer. Residues Lys1419–Lys1472 are Cytoplasmic-facing. The segment at Ile1425 to Pro1464 is interacts with and activates NS3 protease. The interval Gly1429 to Asp1451 is disordered. Residues Val1473–Trp1493 constitute an intramembrane region (helical). The Lumenal portion of the chain corresponds to Tyr1494–Thr2170. The Peptidase S7 domain maps to Ser1503–Cys1680. Active-site charge relay system; for serine protease NS3 activity residues include His1553, Asp1577, and Ser1637. Residues Pro1683–Glu1839 enclose the Helicase ATP-binding domain. An important for RNA-binding region spans residues Lys1687–Gln1690. Leu1696–Thr1703 is a binding site for ATP. The DEAH box signature appears at Asp1787 to His1790. In terms of domain architecture, Helicase C-terminal spans Pro1834 to Glu2013. The residue at position 1891 (Lys1891) is an N6-acetyllysine; by host. The chain crosses the membrane as a helical span at residues Leu2171–Leu2191. Residues Met2192–Lys2195 are Lumenal-facing. Residues Gly2196–Leu2216 constitute an intramembrane region (helical). Residues Ser2217–Glu2218 are Cytoplasmic-facing. The chain crosses the membrane as a helical span at residues Ile2219–Ile2239. Residues Pro2240–Ala2254 lie on the Lumenal side of the membrane. An intramembrane region (helical) is located at residues Ile2255 to Ala2269. Over Asn2270–Ser2307 the chain is Lumenal. The helical intramembrane region spans Ala2308–Thr2328. Over Thr2329–Gly2344 the chain is Lumenal. The chain crosses the membrane as a helical span at residues Val2345 to Leu2365. Over Met2366–Pro2375 the chain is Cytoplasmic. A helical transmembrane segment spans residues Leu2376–Leu2396. Over Gln2397–Gln2441 the chain is Lumenal. A helical membrane pass occupies residues Val2442–Gly2462. Residues Glu2463–Leu3423 lie on the Cytoplasmic side of the membrane. An mRNA cap 0-1 NS5-type MT domain is found at Gly2521–Ala2785. Lys2533–Met2539 contributes to the GTP binding site. Ser2576 is an S-adenosyl-L-methionine binding site. Ser2576 is modified (phosphoserine). Residue Lys2581 is the For 2'-O-MTase activity of the active site. Residues Val2597–Leu2600 form an SUMO-interacting motif (SIM) region. S-adenosyl-L-methionine-binding residues include Gly2606, Trp2607, Thr2624, Lys2625, His2630, Glu2631, Asp2651, Val2652, Asp2666, and Ile2667. Catalysis depends on Asp2666, which acts as the For 2'-O-MTase activity. Residue Glu2669–Glu2675 coordinates GTP. Lys2702 acts as the For 2'-O-MTase activity in catalysis. Arg2733–Ser2735 contributes to the GTP binding site. Glu2738 serves as the catalytic For 2'-O-MTase activity. Tyr2740 contacts S-adenosyl-L-methionine. Positions Lys2908 to Val2914 match the Nuclear localization signal (NLS) motif. 4 residues coordinate Zn(2+): Glu2959, His2963, Cys2968, and Cys2971. The RdRp catalytic domain occupies Gly3049–Ala3199. The Zn(2+) site is built by His3234, Cys3250, and Cys3369.

It in the N-terminal section; belongs to the class I-like SAM-binding methyltransferase superfamily. mRNA cap 0-1 NS5-type methyltransferase family. Homodimer. Interacts with host SERTAD3; this interaction promotes capsid protein C degradation. Interacts with host CAPRIN1; this interaction is probably linked to the inhibition of stress granules formation by the virus. Interacts with host G3BP1; this interaction is probably linked to the inhibition of stress granules formation by the virus. In terms of assembly, forms heterodimers with envelope protein E in the endoplasmic reticulum and Golgi. Interacts with non-structural protein 2A. As to quaternary structure, homodimer; in the endoplasmic reticulum and Golgi. Interacts with host TYRO3, AXL and DC-SIGN proteins. Interacts with non-structural protein 2A. Interacts with host HAVCR1; this interaction likely mediates virus attachment to host cell. Interacts with host NCAM1. Interacts with host HSPA5. Interacts with Aedes aegypti SRPN25, APY and venom allergen-1 salivary proteins; the interactions do not affect Zika virus replication in human endothelial cells and keratinocytes. Homodimer; Homohexamer when secreted. Interacts with host TBK1. Interacts with host USP8. Interacts with envelope protein E. In terms of assembly, interacts with the structural protein prM/E complex, and the NS2B/NS3 protease complex. As to quaternary structure, forms a heterodimer with serine protease NS3. May form homooligomers. Interacts with human SPCS1. Interacts with non-structural protein 2A. Forms a heterodimer with NS2B. Interacts with NS4B. Interacts with unphosphorylated RNA-directed RNA polymerase NS5; this interaction stimulates RNA-directed RNA polymerase NS5 guanylyltransferase activity. Interacts with non-structural protein 2A. Interacts with host SHFL; this interaction promotes NS3 degradation via a lysosome-dependent pathway. Interacts with host CEP63; this interaction disorganizes the centrosome and inhibits host innate immune response. In terms of assembly, may interact with host ANKLE2; the interaction may cause defects in brain development, such as microcephaly. May interact with host SRPRA and SEC61G. As to quaternary structure, interacts with serine protease NS3. Interacts with NS1. Homodimer. Interacts with host STAT2; this interaction inhibits the phosphorylation of the latter, and, when all viral proteins are present (polyprotein), targets STAT2 for degradation. Interacts with host TBK1 and IKBKE; these interactions lead to the inhibition of the host RIG-I signaling pathway. Interacts with host PAF1 complex; the interaction may prevent the recruitment of the host PAF1 complex to interferon-responsive genes, and thus reduces the immune response. Interacts with serine protease NS3. Interacts with host KPNA2. Interacts with host ZSWIM8; this interaction allows STAT2 binding to ZSWIM8 and subsequent proteasomal degradation leading to inhibition of interferon signaling. In terms of processing, specific enzymatic cleavages in vivo yield mature proteins. Cleavages in the lumen of endoplasmic reticulum are performed by host signal peptidase, whereas cleavages in the cytoplasmic side are performed by serine protease NS3. Signal cleavage at the 2K-4B site requires a prior NS3 protease-mediated cleavage at the 4A-2K site. Post-translationally, cleaved in post-Golgi vesicles by a host furin, releasing the mature small envelope protein M, and peptide pr. This cleavage is incomplete as up to 30% of viral particles still carry uncleaved prM. N-glycosylation plays a role in virulence in mammalian and mosquito hosts, but may have no effect on neurovirulence. In terms of processing, ubiquitination by host TRIM7 promotes virus attachment and fusion of the virus and the host endosome membrane. Post-translationally, N-glycosylated. The excreted form is glycosylated, which is required for efficient secretion of the protein from infected cells. Ubiquitination by host TRIM22 leads to proteasomal degradation. In terms of processing, acetylated by host KAT5. Acetylation modulates NS3 RNA-binding and unwinding activities and plays an important positive role for viral replication. Post-translationally, phosphorylated on serines residues. This phosphorylation may trigger NS5 nuclear localization. Sumoylated, required for regulating IFN induced interferon stimulated genes/ISGs.

Its subcellular location is the virion. It localises to the host nucleus. It is found in the host cytoplasm. The protein resides in the host perinuclear region. The protein localises to the secreted. Its subcellular location is the virion membrane. It localises to the host endoplasmic reticulum membrane. It is found in the host cell surface. It carries out the reaction a 5'-end (5'-triphosphoguanosine)-ribonucleoside in mRNA + S-adenosyl-L-methionine = a 5'-end (N(7)-methyl 5'-triphosphoguanosine)-ribonucleoside in mRNA + S-adenosyl-L-homocysteine. The catalysed reaction is a 5'-end (N(7)-methyl 5'-triphosphoguanosine)-ribonucleoside in mRNA + S-adenosyl-L-methionine = a 5'-end (N(7)-methyl 5'-triphosphoguanosine)-(2'-O-methyl-ribonucleoside) in mRNA + S-adenosyl-L-homocysteine + H(+). It catalyses the reaction RNA(n) + a ribonucleoside 5'-triphosphate = RNA(n+1) + diphosphate. The enzyme catalyses Selective hydrolysis of -Xaa-Xaa-|-Yaa- bonds in which each of the Xaa can be either Arg or Lys and Yaa can be either Ser or Ala.. It carries out the reaction a ribonucleoside 5'-triphosphate + H2O = a ribonucleoside 5'-diphosphate + phosphate + H(+). The catalysed reaction is ATP + H2O = ADP + phosphate + H(+). Its function is as follows. Plays a role in virus budding by binding to the cell membrane and gathering the viral RNA into a nucleocapsid that forms the core of the mature virus particle. During virus entry, may induce genome penetration into the host cytoplasm after hemifusion induced by the surface proteins. Can migrate to the cell nucleus where it modulates host functions. Inhibits the integrated stress response (ISR) in the infected cell. Functionally, inhibits RNA silencing by interfering with host Dicer. Prevents premature fusion activity of envelope proteins in trans-Golgi by binding to envelope protein E at pH 6.0. After virion release in extracellular space, gets dissociated from E dimers. In terms of biological role, plays a role in host immune defense modulation and protection of envelope protein E during virion synthesis. PrM-E cleavage is inefficient, many virions are only partially matured and immature prM-E proteins could play a role in immune evasion. Contributes to fetal microcephaly in humans. Acts as a chaperone for envelope protein E during intracellular virion assembly by masking and inactivating envelope protein E fusion peptide. prM is the only viral peptide matured by host furin in the trans-Golgi network probably to avoid catastrophic activation of the viral fusion activity in acidic Golgi compartment prior to virion release. Its function is as follows. May play a role in virus budding. Exerts cytotoxic effects by activating a mitochondrial apoptotic pathway through M ectodomain. May display a viroporin activity. Functionally, binds to host cell surface receptors and mediates fusion between viral and cellular membranes. Efficient virus attachment to cell is, at least in part, mediated by host HAVCR1 in a cell-type specific manner. In addition, host NCAM1 can also be used as entry receptor. Interaction with host HSPA5 plays an important role in the early stages of infection as well. Envelope protein is synthesized in the endoplasmic reticulum and forms a heterodimer with protein prM. The heterodimer plays a role in virion budding in the ER, and the newly formed immature particle is covered with 60 spikes composed of heterodimers between precursor prM and envelope protein E. The virion is transported to the Golgi apparatus where the low pH causes the dissociation of PrM-E heterodimers and formation of E homodimers. PrM-E cleavage is inefficient, many virions are only partially matured and immature prM-E proteins could play a role in immune evasion. Plays a role in the inhibition of host RLR-induced interferon-beta activation by targeting TANK-binding kinase 1/TBK1. In addition, recruits the host deubiquitinase USP8 to cleave 'Lys-11'-linked polyubiquitin chains from caspase-1/CASP1 thus inhibiting its proteasomal degradation. In turn, stabilized CASP1 promotes cleavage of cGAS, which inhibits its ability to recognize mitochondrial DNA release and initiate type I interferon signaling. In terms of biological role, component of the viral RNA replication complex that recruits genomic RNA, the structural protein prM/E complex, and the NS2B/NS3 protease complex to the virion assembly site and orchestrates virus morphogenesis. Also antagonizes the host alpha/beta interferon antiviral response. May disrupt adherens junction formation and thereby impair proliferation of radial cells in the host cortex. Its function is as follows. Required cofactor for the serine protease function of NS3. Functionally, displays three enzymatic activities: serine protease, NTPase and RNA helicase. NS3 serine protease, in association with NS2B, performs its autocleavage and cleaves the polyprotein at dibasic sites in the cytoplasm: C-prM, NS2A-NS2B, NS2B-NS3, NS3-NS4A, NS4A-2K and NS4B-NS5. NS3 RNA helicase binds RNA and unwinds dsRNA in the 3' to 5' direction. Leads to translation arrest when expressed ex vivo. Disrupts host centrosome organization in a CEP63-dependent manner to degrade host TBK1 and inhibits innate immune response. Inhibits the integrated stress response (ISR) in the infected cell. Regulates the ATPase activity of the NS3 helicase activity. NS4A allows NS3 helicase to conserve energy during unwinding. Cooperatively with NS4B suppresses the Akt-mTOR pathway and leads to cellular dysregulation. By inhibiting host ANKLE2 functions, may cause defects in brain development, such as microcephaly. Also antagonizes the host MDA5-mediated induction of alpha/beta interferon antiviral response. Leads to translation arrest when expressed ex vivo. Inhibits the integrated stress response (ISR) in the infected cell. In terms of biological role, functions as a signal peptide for NS4B and is required for the interferon antagonism activity of the latter. Its function is as follows. Induces the formation of ER-derived membrane vesicles where the viral replication takes place. Also plays a role in the inhibition of host RLR-induced interferon-beta production at TANK-binding kinase 1/TBK1 level. Cooperatively with NS4A suppresses the Akt-mTOR pathway and leads to cellular dysregulation. Functionally, replicates the viral (+) and (-) RNA genome, and performs the capping of genomes in the cytoplasm. Methylates viral RNA cap at guanine N-7 and ribose 2'-O positions. Once sufficient NS5 is expressed, binds to the cap-proximal structure and inhibits further translation of the viral genome. Besides its role in RNA genome replication, also prevents the establishment of a cellular antiviral state by blocking the interferon-alpha/beta (IFN-alpha/beta) signaling pathway. Mechanistically, interferes with host kinases TBK1 and IKKE upstream of interferon regulatory factor 3/IRF3 to inhibit the RIG-I pathway. Also antagonizes type I interferon signaling by targeting STAT2 for degradation by the proteasome thereby preventing activation of JAK-STAT signaling pathway. Mechanistically, acts as a scaffold protein to connect host ZSWIM8/CUL3 ligase complex and STAT2, leading to STAT2 degradation. Within the host nucleus, disrupts host SUMO1 and STAT2 co-localization with PML, resulting in PML degradation. May also reduce immune responses by preventing the recruitment of the host PAF1 complex to interferon-responsive genes. The protein is Genome polyprotein of Zika virus (isolate ZIKV/Human/Cambodia/FSS13025/2010) (ZIKV).